Reading from the N-terminus, the 74-residue chain is Chitinases 70, 30, and 20.5 kDa (74 aa).

Positions 1–27 (XTSATATYAKTQDWGSCFEGKWTIKNT) are N-terminus of 70 kDa chitinase. The N-terminus of 30 kDa chitinase stretch occupies residues 28–52 (AACSSYPSWVAGRSYAAGDIVYYTD). Residues 53–74 (XGYTDLPVSRQKMCQNGMVTNC) form an N-terminus of 20.5 kDa chitinase region.

It belongs to the glycosyl hydrolase 18 family. Chitinase class II subfamily. In terms of assembly, homodimer, but homotrimers and homotetramers could be observed for the 20.5 and 30 kDa chitinases. In terms of processing, the 70 kDa chitinase is probably the precursor protein of the 30 and 20.5 kDa chitinases.

The catalysed reaction is Random endo-hydrolysis of N-acetyl-beta-D-glucosaminide (1-&gt;4)-beta-linkages in chitin and chitodextrins.. Able to cleave chitin oligomers from N=3 to 6. This Streptomyces olivaceoviridis (Streptomyces corchorusii) protein is Chitinases 70, 30, and 20.5 kDa.